Consider the following 109-residue polypeptide: Phosphocarrier protein HPr (109 aa).

In terms of domain architecture, HPr spans 22–109 (ELSAVFTIRN…EVFNSGFGEL (88 aa)). His-36 serves as the catalytic Pros-phosphohistidine intermediate.

The protein belongs to the HPr family.

It localises to the cytoplasm. Its function is as follows. General (non sugar-specific) component of the phosphoenolpyruvate-dependent sugar phosphotransferase system (sugar PTS). This major carbohydrate active-transport system catalyzes the phosphorylation of incoming sugar substrates concomitantly with their translocation across the cell membrane. The phosphoryl group from phosphoenolpyruvate (PEP) is transferred to the phosphoryl carrier protein HPr by enzyme I. Phospho-HPr then transfers it to the PTS EIIA domain. The chain is Phosphocarrier protein HPr (ptsH) from Chlamydia trachomatis serovar D (strain ATCC VR-885 / DSM 19411 / UW-3/Cx).